The chain runs to 107 residues: Urease subunit beta (107 aa).

This sequence belongs to the urease beta subunit family. As to quaternary structure, heterotrimer of UreA (gamma), UreB (beta) and UreC (alpha) subunits. Three heterotrimers associate to form the active enzyme.

The protein localises to the cytoplasm. The catalysed reaction is urea + 2 H2O + H(+) = hydrogencarbonate + 2 NH4(+). It functions in the pathway nitrogen metabolism; urea degradation; CO(2) and NH(3) from urea (urease route): step 1/1. The protein is Urease subunit beta of Escherichia coli.